The primary structure comprises 290 residues: 33 kDa chaperonin (290 aa).

Disulfide bonds link C235–C237 and C268–C271.

The protein belongs to the HSP33 family. Post-translationally, under oxidizing conditions two disulfide bonds are formed involving the reactive cysteines. Under reducing conditions zinc is bound to the reactive cysteines and the protein is inactive.

It is found in the cytoplasm. Functionally, redox regulated molecular chaperone. Protects both thermally unfolding and oxidatively damaged proteins from irreversible aggregation. Plays an important role in the bacterial defense system toward oxidative stress. This Streptococcus pyogenes serotype M2 (strain MGAS10270) protein is 33 kDa chaperonin.